Here is a 286-residue protein sequence, read N- to C-terminus: MQRYWRFQDNKIQDICFGVLGESWIQRPVMARYYSEGQSLQQDDSFIEGVSDQVLVAVVVSLALTATLLYALLRNVQQNIHPENQELVRVLREQFQTEQDVPAPARQQFYTEMYCPICLHQASFPVETNCGHLFCGSCIIAYWRYGSWLGAISCPICRQTVTLLLTVFGEDDQSQDVIRLRQDVNDYNRRFSGQPRSIMERIMDLPTLLRHAFREVFSVGGLFWMFRIRIMLCLMGAFFYLISPLDFVPEALFGILGFLDDFFVIFLLLIYISIMYREVITQRLTR.

Over 1–52 (MQRYWRFQDNKIQDICFGVLGESWIQRPVMARYYSEGQSLQQDDSFIEGVSD) the chain is Lumenal. Residues 53–73 (QVLVAVVVSLALTATLLYALL) form a helical membrane-spanning segment. At 74–229 (RNVQQNIHPE…GGLFWMFRIR (156 aa)) the chain is on the cytoplasmic side. An RING-type zinc finger spans residues 115–158 (CPICLHQASFPVETNCGHLFCGSCIIAYWRYGSWLGAISCPICR). A helical transmembrane segment spans residues 230 to 250 (IMLCLMGAFFYLISPLDFVPE). Position 251 (Ala-251) is a topological domain, lumenal. A helical membrane pass occupies residues 252–272 (LFGILGFLDDFFVIFLLLIYI). The Cytoplasmic segment spans residues 273-286 (SIMYREVITQRLTR).

As to quaternary structure, constitutively associated with the ERLIN1/ERLIN 2 complex. Interacts with activated ITPR1.

The protein resides in the endoplasmic reticulum membrane. The enzyme catalyses S-ubiquitinyl-[E2 ubiquitin-conjugating enzyme]-L-cysteine + [acceptor protein]-L-lysine = [E2 ubiquitin-conjugating enzyme]-L-cysteine + N(6)-ubiquitinyl-[acceptor protein]-L-lysine.. It participates in protein modification; protein ubiquitination. In terms of biological role, E3 ubiquitin-protein ligase that plays an essential role in stimulus-induced inositol 1,4,5-trisphosphate receptor type 1 (ITPR1) ubiquitination and degradation via the endoplasmic reticulum-associated degradation (ERAD) pathway. Also involved in ITPR1 turnover in resting cells. Selectively inhibits the TLR3-triggered innate immune response by promoting the 'Lys-48'-linked polyubiquitination and degradation of TLR3. This chain is E3 ubiquitin-protein ligase RNF170 (Rnf170), found in Mus musculus (Mouse).